The chain runs to 123 residues: UPF0102 protein Pput_4400 (123 aa).

This sequence belongs to the UPF0102 family.

The sequence is that of UPF0102 protein Pput_4400 from Pseudomonas putida (strain ATCC 700007 / DSM 6899 / JCM 31910 / BCRC 17059 / LMG 24140 / F1).